Consider the following 387-residue polypeptide: 23S rRNA (uracil(747)-C(5))-methyltransferase RlmC (387 aa).

[4Fe-4S] cluster contacts are provided by Cys-3, Cys-11, Cys-14, and Cys-86. S-adenosyl-L-methionine contacts are provided by Gln-211, Phe-240, Glu-269, and Asn-319. Residue Cys-346 is the Nucleophile of the active site.

It belongs to the class I-like SAM-binding methyltransferase superfamily. RNA M5U methyltransferase family. RlmC subfamily.

The enzyme catalyses uridine(747) in 23S rRNA + S-adenosyl-L-methionine = 5-methyluridine(747) in 23S rRNA + S-adenosyl-L-homocysteine + H(+). Its function is as follows. Catalyzes the formation of 5-methyl-uridine at position 747 (m5U747) in 23S rRNA. This Pasteurella multocida (strain Pm70) protein is 23S rRNA (uracil(747)-C(5))-methyltransferase RlmC.